A 368-amino-acid polypeptide reads, in one-letter code: Agmatine deiminase (368 aa).

The Amidino-cysteine intermediate role is filled by Cys357.

This sequence belongs to the agmatine deiminase family. Homodimer.

The enzyme catalyses agmatine + H2O = N-carbamoylputrescine + NH4(+). Its pathway is amine and polyamine biosynthesis; putrescine biosynthesis via agmatine pathway; N-carbamoylputrescine from agmatine: step 1/1. Its function is as follows. Mediates the hydrolysis of agmatine into N-carbamoylputrescine in the arginine decarboxylase (ADC) pathway of putrescine biosynthesis, a basic polyamine. This Pseudomonas savastanoi pv. phaseolicola (strain 1448A / Race 6) (Pseudomonas syringae pv. phaseolicola (strain 1448A / Race 6)) protein is Agmatine deiminase.